An 89-amino-acid polypeptide reads, in one-letter code: Small ribosomal subunit protein uS15 (89 aa).

This sequence belongs to the universal ribosomal protein uS15 family. As to quaternary structure, part of the 30S ribosomal subunit. Forms a bridge to the 50S subunit in the 70S ribosome, contacting the 23S rRNA.

Functionally, one of the primary rRNA binding proteins, it binds directly to 16S rRNA where it helps nucleate assembly of the platform of the 30S subunit by binding and bridging several RNA helices of the 16S rRNA. In terms of biological role, forms an intersubunit bridge (bridge B4) with the 23S rRNA of the 50S subunit in the ribosome. This chain is Small ribosomal subunit protein uS15, found in Bifidobacterium longum (strain DJO10A).